Consider the following 313-residue polypeptide: Nematocyst expressed protein 8 (313 aa).

The signal sequence occupies residues M1 to A19. The segment at G24–R56 is disordered. Residues S32–P44 are compositionally biased toward acidic residues. ShKT domains follow at residues C65–C99, C109–C145, and F151–Y186. Intrachain disulfides connect C65–C99, C72–C92, C81–C96, C109–C145, C127–C142, C160–C179, and C169–C183. A compositionally biased stretch (low complexity) spans T222 to A244. A disordered region spans residues T222–Q313. Positions A245 to P265 are enriched in pro residues. Positions T280 to A297 are enriched in acidic residues.

This sequence belongs to the NEP3 family. Nematocytes. In late planulae, is only expressed in a handful of nematocytes in the lower pharynx. Is absent from the tentacles and outer body wall.

It localises to the nematocyst. The protein localises to the secreted. In terms of biological role, probable toxin probably only used for predation. The chain is Nematocyst expressed protein 8 from Nematostella vectensis (Starlet sea anemone).